A 679-amino-acid chain; its full sequence is Oxidant-induced cell-cycle arrest protein 5 (679 aa).

Positions 50–441 (GVPPQLRHVV…RVWDLLLGWR (392 aa)) constitute a Rab-GAP TBC domain. Over residues 135-153 (NPAGSSSNANTTNIATPTP) the composition is skewed to low complexity. Disordered stretches follow at residues 135-159 (NPAGSSSNANTTNIATPTPVSSSDA), 250-271 (TNNGNNGNSNSSSNNTNNNNTN), and 524-544 (QSKAQKDNTVPSPGSDSNDKS). Positions 524–539 (QSKAQKDNTVPSPGSD) are enriched in polar residues.

It belongs to the OCA5 family.

The protein localises to the cytoplasm. Functionally, required for replication of brome mosaic virus (BMV), a positive-strand RNA virus. This is Oxidant-induced cell-cycle arrest protein 5 (OCA5) from Saccharomyces cerevisiae (strain RM11-1a) (Baker's yeast).